We begin with the raw amino-acid sequence, 518 residues long: Nif-specific regulatory protein (518 aa).

The 142-residue stretch at 35–176 (NTARALAAIL…MVANLISQPL (142 aa)) folds into the GAF domain. In terms of domain architecture, Sigma-54 factor interaction spans 205–432 (VGKSQAMRQT…LENCLERASV (228 aa)). ATP-binding positions include 232-239 (GESGTGKE) and 295-304 (ADGGTLFLDE). The tract at residues 433–475 (MTDEGLIDRDVILFNHHESPALSVKPGLPLATDESWLDQELDE) is inter-domain linker. The interval 476–518 (RQRVIAALEKTGWVQAKAARLLGMTPRQIAYRIQIMDINMHRI) is C-terminal DNA-binding domain. Positions 490 to 509 (QAKAARLLGMTPRQIAYRIQ) form a DNA-binding region, H-T-H motif.

Interacts with sigma-54.

Functionally, required for activation of most nif operons, which are directly involved in nitrogen fixation. In Enterobacter agglomerans (Erwinia herbicola), this protein is Nif-specific regulatory protein (nifA).